The sequence spans 285 residues: Undecaprenyl-diphosphatase (285 aa).

7 helical membrane-spanning segments follow: residues 40 to 60, 92 to 112, 122 to 142, 159 to 179, 197 to 217, 233 to 253, and 259 to 279; these read DELL…LLYF, LCIL…ENFI, SVYA…WADA, FLIG…RSGI, FSML…LLGL, LIVA…LMAL, and FLPF…TSPI.

Belongs to the UppP family.

The protein localises to the cell inner membrane. The enzyme catalyses di-trans,octa-cis-undecaprenyl diphosphate + H2O = di-trans,octa-cis-undecaprenyl phosphate + phosphate + H(+). Functionally, catalyzes the dephosphorylation of undecaprenyl diphosphate (UPP). Confers resistance to bacitracin. In Hyphomonas neptunium (strain ATCC 15444), this protein is Undecaprenyl-diphosphatase.